A 318-amino-acid chain; its full sequence is HTH-type transcriptional regulatory protein TyrR (318 aa).

In terms of domain architecture, Sigma-54 factor interaction; truncated spans 15–239 (FIVQSEAMKS…LYNTLYRACS (225 aa)). ATP is bound by residues 43–50 (GETGSGKD) and 101–110 (ANKGTVLLDG). Positions 292 to 312 (STRKLAQRLGVSHTAIANKLK) form a DNA-binding region, H-T-H motif.

As to quaternary structure, homodimer. In presence of tyrosine (or high concentrations of phenylalanine or tryptophan) and ATP, it self-associates to form a hexamer.

The protein localises to the cytoplasm. With respect to regulation, the DNA binding ability is drastically reduced in the presence of ATP. Tyrosine further reduces the binding affinity of TyrR in the presence of ATP. Functionally, transcriptional regulator of the TyrR regulon, which includes a number of genes coding for proteins involved in the biosynthesis or transport of the three aromatic amino acids, phenylalanine, tyrosine and tryptophan. These three aromatic amino acids act as effectors which bind to the TyrR protein to form an active regulatory protein. Acts by binding specifically to TyrR boxes in the promoter region of the target genes. Can efficiently repress the transcription of the aroF promoter, but lacks the ability to function as a transcriptional activator. The protein is HTH-type transcriptional regulatory protein TyrR of Haemophilus influenzae (strain ATCC 51907 / DSM 11121 / KW20 / Rd).